Here is a 708-residue protein sequence, read N- to C-terminus: Leukotoxin translocation ATP-binding protein LktB (708 aa).

One can recognise a Peptidase C39 domain in the interval 1–126; the sequence is MEANHQRNDL…ACYQGQLILV (126 aa). Positions 155–437 constitute an ABC transmembrane type-1 domain; sequence FLETLIVSIF…LAQLWQDFQQ (283 aa). 5 helical membrane passes run 159–179, 192–212, 270–290, 296–316, and 389–409; these read LIVS…FQVV, LNII…LSGL, ALTS…MWYY, LVIL…SPIL, and VMVI…LSIG. The 236-residue stretch at 469 to 704 folds into the ABC transporter domain; sequence ISFKNIRFRY…SNGLYSYLHQ (236 aa). 503–510 serves as a coordination point for ATP; sequence GRSGSGKS.

It belongs to the ABC transporter superfamily. Protein-1 exporter (TC 3.A.1.109) family. As to quaternary structure, homodimer.

It localises to the cell inner membrane. The enzyme catalyses ATP + H2O + proteinSide 1 = ADP + phosphate + proteinSide 2.. In terms of biological role, part of the ABC transporter complex LktBD involved in leukotoxin export. Transmembrane domains (TMD) form a pore in the inner membrane and the ATP-binding domain (NBD) is responsible for energy generation. This chain is Leukotoxin translocation ATP-binding protein LktB (lktB), found in Mannheimia haemolytica (Pasteurella haemolytica).